Consider the following 261-residue polypeptide: Cytochrome c oxidase subunit 3 (261 aa).

Over 1–15 (MTHQTHAYHMVNPSP) the chain is Mitochondrial matrix. A helical transmembrane segment spans residues 16 to 34 (WPLTGALSALLMTSGLAMW). At 35 to 40 (FHFNSV) the chain is on the mitochondrial intermembrane side. The helical transmembrane segment at 41-66 (TLLTLGLTTNMLTMYQWWRDIIREST) threads the bilayer. Residues 67 to 72 (FQGHHT) are Mitochondrial matrix-facing. Residues 73–105 (PTVQKGLRYGMILFIISEVLFFTGFFWAFYHSS) traverse the membrane as a helical segment. Over 106–128 (LAPTPELGGCWPPTGISPLNPLE) the chain is Mitochondrial intermembrane. Residues 129–152 (VPLLNTSVLLASGVSITWAHHSLM) traverse the membrane as a helical segment. The Mitochondrial matrix segment spans residues 153–155 (EGN). Residues 156-183 (RNHMLQALFITIALGVYFTLLQASEYYE) traverse the membrane as a helical segment. At 184–190 (APFTISD) the chain is on the mitochondrial intermembrane side. A helical membrane pass occupies residues 191-223 (GIYGSTFFVATGFHGLHVIIGSTFLIVCFFRQL). The Mitochondrial matrix segment spans residues 224 to 232 (KFHFTSNHH). A helical transmembrane segment spans residues 233 to 256 (FGFEAAAWYWHFVDVVWLFLYVSI). Residues 257-261 (YWWGS) are Mitochondrial intermembrane-facing.

It belongs to the cytochrome c oxidase subunit 3 family. As to quaternary structure, component of the cytochrome c oxidase (complex IV, CIV), a multisubunit enzyme composed of 14 subunits. The complex is composed of a catalytic core of 3 subunits MT-CO1, MT-CO2 and MT-CO3, encoded in the mitochondrial DNA, and 11 supernumerary subunits COX4I, COX5A, COX5B, COX6A, COX6B, COX6C, COX7A, COX7B, COX7C, COX8 and NDUFA4, which are encoded in the nuclear genome. The complex exists as a monomer or a dimer and forms supercomplexes (SCs) in the inner mitochondrial membrane with NADH-ubiquinone oxidoreductase (complex I, CI) and ubiquinol-cytochrome c oxidoreductase (cytochrome b-c1 complex, complex III, CIII), resulting in different assemblies (supercomplex SCI(1)III(2)IV(1) and megacomplex MCI(2)III(2)IV(2)).

Its subcellular location is the mitochondrion inner membrane. It catalyses the reaction 4 Fe(II)-[cytochrome c] + O2 + 8 H(+)(in) = 4 Fe(III)-[cytochrome c] + 2 H2O + 4 H(+)(out). Functionally, component of the cytochrome c oxidase, the last enzyme in the mitochondrial electron transport chain which drives oxidative phosphorylation. The respiratory chain contains 3 multisubunit complexes succinate dehydrogenase (complex II, CII), ubiquinol-cytochrome c oxidoreductase (cytochrome b-c1 complex, complex III, CIII) and cytochrome c oxidase (complex IV, CIV), that cooperate to transfer electrons derived from NADH and succinate to molecular oxygen, creating an electrochemical gradient over the inner membrane that drives transmembrane transport and the ATP synthase. Cytochrome c oxidase is the component of the respiratory chain that catalyzes the reduction of oxygen to water. Electrons originating from reduced cytochrome c in the intermembrane space (IMS) are transferred via the dinuclear copper A center (CU(A)) of subunit 2 and heme A of subunit 1 to the active site in subunit 1, a binuclear center (BNC) formed by heme A3 and copper B (CU(B)). The BNC reduces molecular oxygen to 2 water molecules using 4 electrons from cytochrome c in the IMS and 4 protons from the mitochondrial matrix. In Neotragus moschatus (Suni), this protein is Cytochrome c oxidase subunit 3 (MT-CO3).